A 493-amino-acid chain; its full sequence is Insulinoma-associated protein 2 (493 aa).

The segment covering 1–12 (MPRGFLVKRTKR) has biased composition (basic residues). The interval 1-20 (MPRGFLVKRTKRSGSSYRAR) is SNAG domain. The disordered stretch occupies residues 1–77 (MPRGFLVKRT…PGPSPARPAG (77 aa)). The C2H2-type 1; atypical zinc-finger motif lies at 203–223 (FICQLCKHQYADPFALAQHRC). Residues 231–253 (YRCPECDKVFSCPANLASHRRWH) form a C2H2-type 2 zinc finger. The interval 248 to 310 (SHRRWHKPRP…SGDGQHRDSA (63 aa)) is disordered. Pro residues predominate over residues 267–276 (PHAPLTPPDP). Residues 283-294 (ENGRVPRTDDQH) show a composition bias toward basic and acidic residues. 3 consecutive C2H2-type zinc fingers follow at residues 354–376 (FVCP…LGTH), 398–420 (FACP…RLWH), and 452–475 (FSCK…NKCH).

Expressed in spleen, stomach, liver, kidney and testis. In the pancreas, expressed in islet cells, including insulin-producing beta-cells, but not in acinar cells (at protein level). In the brain, expressed in the neuronal cells of the cerebral cortex, the Purkinje cells of the cerebellum and the hippocampal region including CA1 and CA3 (at protein level).

The protein resides in the cytoplasm. It localises to the nucleus. In terms of biological role, may function as a growth suppressor or tumor suppressor in liver cells and in certain neurons. In Mus musculus (Mouse), this protein is Insulinoma-associated protein 2 (Insm2).